The sequence spans 56 residues: Small ribosomal subunit protein uS14z/uS14y/uS14x (56 aa).

Zn(2+) is bound by residues C21, C24, C39, and C42.

It belongs to the universal ribosomal protein uS14 family. Zn(2+) serves as cofactor.

This is Small ribosomal subunit protein uS14z/uS14y/uS14x (RPS29A) from Arabidopsis thaliana (Mouse-ear cress).